We begin with the raw amino-acid sequence, 281 residues long: Tumor necrosis factor ligand superfamily member 10 (281 aa).

Residues 1 to 17 lie on the Cytoplasmic side of the membrane; the sequence is MAMMEVQGGPSLGQTCV. The helical; Signal-anchor for type II membrane protein transmembrane segment at 18–38 threads the bilayer; sequence LIVIFTVLLQSLCVAVTYVYF. The Extracellular portion of the chain corresponds to 39–281; the sequence is TNELKQMQDK…ASFFGAFLVG (243 aa). Residues 122 to 280 form the THD domain; the sequence is VAAHITGTRG…EASFFGAFLV (159 aa). Residues 124–144 are disordered; the sequence is AHITGTRGRSNTLSSPNSKNE. Over residues 130–141 the composition is skewed to polar residues; that stretch reads RGRSNTLSSPNS. Residue cysteine 230 participates in Zn(2+) binding.

The protein belongs to the tumor necrosis factor family. Homotrimer. One TNFSF10 homotrimer interacts with three TNFSF10A mononers. One TNFSF10 homotrimer interacts with three TNFSF10B mononers. In terms of processing, tyrosine phosphorylated by PKDCC/VLK. In terms of tissue distribution, widespread; most predominant in spleen, lung and prostate.

Its subcellular location is the cell membrane. The protein localises to the secreted. In terms of biological role, cytokine that binds to TNFRSF10A/TRAILR1, TNFRSF10B/TRAILR2, TNFRSF10C/TRAILR3, TNFRSF10D/TRAILR4 and possibly also to TNFRSF11B/OPG. Induces apoptosis. Its activity may be modulated by binding to the decoy receptors TNFRSF10C/TRAILR3, TNFRSF10D/TRAILR4 and TNFRSF11B/OPG that cannot induce apoptosis. This is Tumor necrosis factor ligand superfamily member 10 (TNFSF10) from Homo sapiens (Human).